The sequence spans 207 residues: MARCKS-related protein 1-B (207 aa).

Low complexity-rich tracts occupy residues 1-25 and 63-77; these read MGSQASKGGVAVEGKAAAADPAAVK and AGAGDAIEPAPAAEG. The interval 1–207 is disordered; it reads MGSQASKGGV…STPAPSEQKE (207 aa). Gly2 is lipidated: N-myristoyl glycine. The span at 78–90 shows a compositional bias: basic and acidic residues; it reads EAAKPEGEATKET. The effector domain involved in lipid-binding stretch occupies residues 93 to 116; the sequence is KKKKKFSLKNSFKFKGISLKKSKK. Positions 100–109 are enriched in low complexity; the sequence is LKNSFKFKGI. 2 stretches are compositionally biased toward basic and acidic residues: residues 131-154 and 163-182; these read TEEKPEENGAATEEKKEEEAKAEE and PKAEEPAAKAEEPAAAKEEA. Residues 195-207 are compositionally biased toward polar residues; that stretch reads ETNSTPAPSEQKE.

It belongs to the MARCKS family. Strongly expressed in brain and eye. Also detected at lower levels in muscle.

It localises to the cytoplasm. It is found in the cytoskeleton. The protein localises to the cell membrane. Involved in the control of cell movement by regulating actin cytoskeleton homeostasis and filopodium and lamellipodium formation. The sequence is that of MARCKS-related protein 1-B from Danio rerio (Zebrafish).